A 167-amino-acid polypeptide reads, in one-letter code: Transcription initiation factor TFIID subunit 10 (167 aa).

Disordered stretches follow at residues 1–56 (MASD…EESE) and 119–139 (TTNI…NPKD). Acidic residues predominate over residues 41 to 56 (EQPDVEEVPLTTEESE). The segment covering 130–139 (SSKDKKNPKD) has biased composition (basic and acidic residues).

The protein belongs to the TAF10 family. As to quaternary structure, belongs to the TFIID complex which is composed of TATA binding protein (Tbp) and a number of TBP-associated factors (TAFs). Also a member of the histone acetylase (HAT) complex. At embryonic stage 9, highest expression is detected within the ectoderm, ventral chord, and anterior foregut primordium. Later in development preferential expression is in the foregut, proventriculus, and central nervous system. Coexpressed with Taf10b in the lateral epidermis and anal plate.

It localises to the cytoplasm. The protein localises to the nucleus. Functionally, TFIID is a multimeric protein complex that plays a central role in mediating promoter responses to various activators and repressors. This chain is Transcription initiation factor TFIID subunit 10, found in Drosophila melanogaster (Fruit fly).